Consider the following 274-residue polypeptide: Bis(5'-nucleosyl)-tetraphosphatase, symmetrical (274 aa).

It belongs to the Ap4A hydrolase family.

The catalysed reaction is P(1),P(4)-bis(5'-adenosyl) tetraphosphate + H2O = 2 ADP + 2 H(+). In terms of biological role, hydrolyzes diadenosine 5',5'''-P1,P4-tetraphosphate to yield ADP. This Shewanella sp. (strain MR-4) protein is Bis(5'-nucleosyl)-tetraphosphatase, symmetrical.